Consider the following 196-residue polypeptide: Beta-crystallin A2 (196 aa).

The segment at 1–11 is N-terminal arm; it reads MTSEAMDTLGQ. Beta/gamma crystallin 'Greek key' domains are found at residues 12–51 and 52–98; these read YKIT…KVES and GPWV…RPVK. The interval 99–104 is connecting peptide; it reads CANHND. Beta/gamma crystallin 'Greek key' domains lie at 105–146 and 147–195; these read SKAI…KVNA and GAWV…RRIQ.

This sequence belongs to the beta/gamma-crystallin family. In terms of assembly, homo/heterodimer, or complexes of higher-order. The structure of beta-crystallin oligomers seems to be stabilized through interactions between the N-terminal arms.

Crystallins are the dominant structural components of the vertebrate eye lens. The polypeptide is Beta-crystallin A2 (CRYBA2) (Gallus gallus (Chicken)).